The chain runs to 912 residues: Protein translocase subunit SecA (912 aa).

Residues glutamine 87, 105-109 (GEGKT), and aspartate 508 each bind ATP. The interval 855 to 912 (QHQDAGGYGADEEVEQMQGGNAPVPVSQVTRDEPKVGRNDPCPCGSGKKYKHCHGQLS) is disordered. Residues cysteine 896, cysteine 898, cysteine 907, and histidine 908 each contribute to the Zn(2+) site. A compositionally biased stretch (basic residues) spans 902 to 912 (KKYKHCHGQLS).

It belongs to the SecA family. In terms of assembly, monomer and homodimer. Part of the essential Sec protein translocation apparatus which comprises SecA, SecYEG and auxiliary proteins SecDF-YajC and YidC. It depends on Zn(2+) as a cofactor.

The protein localises to the cell inner membrane. The protein resides in the cytoplasm. The enzyme catalyses ATP + H2O + cellular proteinSide 1 = ADP + phosphate + cellular proteinSide 2.. In terms of biological role, part of the Sec protein translocase complex. Interacts with the SecYEG preprotein conducting channel. Has a central role in coupling the hydrolysis of ATP to the transfer of proteins into and across the cell membrane, serving both as a receptor for the preprotein-SecB complex and as an ATP-driven molecular motor driving the stepwise translocation of polypeptide chains across the membrane. The chain is Protein translocase subunit SecA from Xanthomonas campestris pv. campestris (strain B100).